The sequence spans 166 residues: Arginine repressor (166 aa).

This sequence belongs to the ArgR family.

The protein resides in the cytoplasm. The protein operates within amino-acid biosynthesis; L-arginine biosynthesis [regulation]. Its function is as follows. Regulates arginine biosynthesis genes. In Mycobacterium ulcerans (strain Agy99), this protein is Arginine repressor.